The following is a 309-amino-acid chain: MEIILANPRGFCAGVDRAISIVERALDLFGAPIYVRHEVVHNKFVVDGLKDRGAIFVDELDEVPDDNTVIFSAHGVSKAVRQEAKTRALKVFDATCPLVTKVHMEVSRVSRKDIECILIGHAGHPEVEGTMGQYSSDSAGIYLVESPEDVASLVVKNPEKLYFCSQTTLSVDDTMDVIAALQAKFPLIEGPRKDDICYATQNRQDAVREIADKVDLMLVVGAKNSSNSNRLKELASKMGVTSYLIDTAENIETDWLTGVNKVGVTAGASAPAVLIKQVVEALKSYGGHQVIEHPGKEESIVFAVPAELR.

Position 12 (Cys12) interacts with [4Fe-4S] cluster. (2E)-4-hydroxy-3-methylbut-2-enyl diphosphate is bound by residues His41 and His74. Dimethylallyl diphosphate-binding residues include His41 and His74. His41 and His74 together coordinate isopentenyl diphosphate. Cys96 provides a ligand contact to [4Fe-4S] cluster. A (2E)-4-hydroxy-3-methylbut-2-enyl diphosphate-binding site is contributed by His124. Position 124 (His124) interacts with dimethylallyl diphosphate. Isopentenyl diphosphate is bound at residue His124. Catalysis depends on Glu126, which acts as the Proton donor. Residue Thr167 participates in (2E)-4-hydroxy-3-methylbut-2-enyl diphosphate binding. Residue Cys197 participates in [4Fe-4S] cluster binding. 4 residues coordinate (2E)-4-hydroxy-3-methylbut-2-enyl diphosphate: Ser225, Ser226, Asn227, and Ser269. Residues Ser225, Ser226, Asn227, and Ser269 each coordinate dimethylallyl diphosphate. Positions 225, 226, 227, and 269 each coordinate isopentenyl diphosphate.

Belongs to the IspH family. [4Fe-4S] cluster is required as a cofactor.

The catalysed reaction is isopentenyl diphosphate + 2 oxidized [2Fe-2S]-[ferredoxin] + H2O = (2E)-4-hydroxy-3-methylbut-2-enyl diphosphate + 2 reduced [2Fe-2S]-[ferredoxin] + 2 H(+). It carries out the reaction dimethylallyl diphosphate + 2 oxidized [2Fe-2S]-[ferredoxin] + H2O = (2E)-4-hydroxy-3-methylbut-2-enyl diphosphate + 2 reduced [2Fe-2S]-[ferredoxin] + 2 H(+). It functions in the pathway isoprenoid biosynthesis; dimethylallyl diphosphate biosynthesis; dimethylallyl diphosphate from (2E)-4-hydroxy-3-methylbutenyl diphosphate: step 1/1. The protein operates within isoprenoid biosynthesis; isopentenyl diphosphate biosynthesis via DXP pathway; isopentenyl diphosphate from 1-deoxy-D-xylulose 5-phosphate: step 6/6. In terms of biological role, catalyzes the conversion of 1-hydroxy-2-methyl-2-(E)-butenyl 4-diphosphate (HMBPP) into a mixture of isopentenyl diphosphate (IPP) and dimethylallyl diphosphate (DMAPP). Acts in the terminal step of the DOXP/MEP pathway for isoprenoid precursor biosynthesis. The sequence is that of 4-hydroxy-3-methylbut-2-enyl diphosphate reductase from Colwellia psychrerythraea (strain 34H / ATCC BAA-681) (Vibrio psychroerythus).